Here is a 67-residue protein sequence, read N- to C-terminus: (2R)-sulfolactate sulfo-lyase subunit alpha (67 aa).

In terms of assembly, (2R)-sulfolactate sulfo-lyase is composed of a SuyA and a SuyB subunit.

It is found in the cytoplasm. It carries out the reaction (2R)-3-sulfolactate = sulfite + pyruvate + H(+). In terms of biological role, together with SuyB, desulfonates sulfolactate to pyruvate and sulfite. The sequence is that of (2R)-sulfolactate sulfo-lyase subunit alpha (suyA) from Paracoccus pantotrophus (Thiosphaera pantotropha).